The chain runs to 706 residues: Ribosomal RNA large subunit methyltransferase K/L (706 aa).

The THUMP domain maps to 43 to 154; it reads LMYQSLLWSR…RDMASVALDL (112 aa).

This sequence belongs to the methyltransferase superfamily. RlmKL family.

Its subcellular location is the cytoplasm. The catalysed reaction is guanosine(2445) in 23S rRNA + S-adenosyl-L-methionine = N(2)-methylguanosine(2445) in 23S rRNA + S-adenosyl-L-homocysteine + H(+). It catalyses the reaction guanosine(2069) in 23S rRNA + S-adenosyl-L-methionine = N(2)-methylguanosine(2069) in 23S rRNA + S-adenosyl-L-homocysteine + H(+). In terms of biological role, specifically methylates the guanine in position 2445 (m2G2445) and the guanine in position 2069 (m7G2069) of 23S rRNA. The polypeptide is Ribosomal RNA large subunit methyltransferase K/L (Yersinia pestis bv. Antiqua (strain Antiqua)).